The chain runs to 429 residues: MIRRKFSRVFSKRTDMHNIIRLLFRNPFFFLFCLFIPFDNTSLQSIGGIMTASPSALILLPGLFVSILSKGLKVNKNILLCFFGVLLISFLYYFYWVFYFPELDPIFILDRGSRYFLLYVFYFLALYYSLRQNIKDIRAGAALIIIVVIFSVLLNYLDPAIINNKSIIQYNDFISPERLRGFSLEASVFGYQIVCSILLLAVLLNWSTFFLVTVTIVIAILTTSKGAALSFLICICFYFSLKGKLMFRVLLSLCSIVISYIIFKYYFLDALASDIDTYSSVATRGTMFIVGLKIFLFNPLGVGFFGYLPSIYDFTSGVIDFIKSHFPFLNFDEVYTYTIPGEYKTVGTKSLILDLLIIYGVFFLIPFIYFIKKILKEFDAQSERNSYFLLLFIIFSNMFFISHLGSYFTPFCIAFLIILSKNRAENDIN.

11 helical membrane-spanning segments follow: residues proline 27–glycine 47, glycine 48–leucine 68, isoleucine 78–phenylalanine 98, isoleucine 106–leucine 126, alanine 142–isoleucine 162, leucine 198–isoleucine 218, alanine 219–phenylalanine 239, valine 249–aspartate 269, phenylalanine 288–leucine 308, leucine 351–isoleucine 371, and phenylalanine 399–leucine 419.

Its subcellular location is the cell membrane. Functionally, may function as a transporter. This is an uncharacterized protein from Klebsiella pneumoniae.